Consider the following 334-residue polypeptide: Isocitrate/homoisocitrate dehydrogenase (334 aa).

An NADH-binding site is contributed by 70 to 72 (ATS). The (2R,3S)-homoisocitrate site is built by serine 72, arginine 85, arginine 88, arginine 98, arginine 118, tyrosine 125, lysine 171, and asparagine 173. Asparagine 173 provides a ligand contact to NADH. The Mg(2+) site is built by aspartate 204, aspartate 228, and aspartate 232. NADH is bound by residues 261–265 (GSAPD) and asparagine 273.

It belongs to the isocitrate and isopropylmalate dehydrogenases family. In terms of assembly, homotetramer. Dimer of dimers. The homotetramer can transiently dissociate into homodimers. Mg(2+) is required as a cofactor.

It catalyses the reaction (2R,3S)-homoisocitrate + NAD(+) = 2-oxoadipate + CO2 + NADH. The enzyme catalyses D-threo-isocitrate + NAD(+) = 2-oxoglutarate + CO2 + NADH. Its pathway is amino-acid biosynthesis; L-lysine biosynthesis via AAA pathway; L-alpha-aminoadipate from 2-oxoglutarate: step 4/5. Functionally, catalyzes the NAD(+)-dependent oxidative decarboxylation of homoisocitrate to 2-oxoadipate (alpha-ketoadipate), a reaction involved in lysine biosynthesis through the alpha-aminoadipate pathway. In addition, has high activity with isocitrate, but is inactive with 3-isopropylmalate. This Thermus thermophilus (strain ATCC BAA-163 / DSM 7039 / HB27) protein is Isocitrate/homoisocitrate dehydrogenase (hicd).